A 143-amino-acid polypeptide reads, in one-letter code: Large ribosomal subunit protein uL13 (143 aa).

This sequence belongs to the universal ribosomal protein uL13 family. As to quaternary structure, part of the 50S ribosomal subunit.

In terms of biological role, this protein is one of the early assembly proteins of the 50S ribosomal subunit, although it is not seen to bind rRNA by itself. It is important during the early stages of 50S assembly. This is Large ribosomal subunit protein uL13 from Dehalococcoides mccartyi (strain ATCC BAA-2266 / KCTC 15142 / 195) (Dehalococcoides ethenogenes (strain 195)).